The primary structure comprises 98 residues: Small ribosomal subunit protein uS17 (98 aa).

The protein belongs to the universal ribosomal protein uS17 family. In terms of assembly, part of the 30S ribosomal subunit.

One of the primary rRNA binding proteins, it binds specifically to the 5'-end of 16S ribosomal RNA. The sequence is that of Small ribosomal subunit protein uS17 from Leptothrix cholodnii (strain ATCC 51168 / LMG 8142 / SP-6) (Leptothrix discophora (strain SP-6)).